The chain runs to 294 residues: Small ribosomal subunit protein uS2 (294 aa).

The disordered stretch occupies residues 232–294 (RATGTTEAPE…SAAGEADAAK (63 aa)). Over residues 246–259 (EWERELLEGSKSEE) the composition is skewed to basic and acidic residues. Residues 260–294 (AAAPAAAEEAPAAAEEAPAAAEATESAAGEADAAK) show a composition bias toward low complexity.

The protein belongs to the universal ribosomal protein uS2 family.

This chain is Small ribosomal subunit protein uS2, found in Arthrobacter sp. (strain FB24).